Reading from the N-terminus, the 91-residue chain is Large ribosomal subunit protein bL27 (91 aa).

The disordered stretch occupies residues 1–22; that stretch reads MAHKKAGGSSRNGRDSDGRRLG.

This sequence belongs to the bacterial ribosomal protein bL27 family.

In Beijerinckia indica subsp. indica (strain ATCC 9039 / DSM 1715 / NCIMB 8712), this protein is Large ribosomal subunit protein bL27.